Reading from the N-terminus, the 557-residue chain is Dihydroxy-acid dehydratase (557 aa).

Cysteine 50 is a binding site for [2Fe-2S] cluster. Aspartate 82 is a binding site for Mg(2+). Cysteine 123 contacts [2Fe-2S] cluster. 2 residues coordinate Mg(2+): aspartate 124 and lysine 125. Lysine 125 is subject to N6-carboxylysine. Cysteine 195 provides a ligand contact to [2Fe-2S] cluster. Glutamate 447 lines the Mg(2+) pocket. Serine 473 (proton acceptor) is an active-site residue.

Belongs to the IlvD/Edd family. Homodimer. The cofactor is [2Fe-2S] cluster. Mg(2+) serves as cofactor.

It carries out the reaction (2R)-2,3-dihydroxy-3-methylbutanoate = 3-methyl-2-oxobutanoate + H2O. It catalyses the reaction (2R,3R)-2,3-dihydroxy-3-methylpentanoate = (S)-3-methyl-2-oxopentanoate + H2O. The protein operates within amino-acid biosynthesis; L-isoleucine biosynthesis; L-isoleucine from 2-oxobutanoate: step 3/4. It participates in amino-acid biosynthesis; L-valine biosynthesis; L-valine from pyruvate: step 3/4. Its function is as follows. Functions in the biosynthesis of branched-chain amino acids. Catalyzes the dehydration of (2R,3R)-2,3-dihydroxy-3-methylpentanoate (2,3-dihydroxy-3-methylvalerate) into 2-oxo-3-methylpentanoate (2-oxo-3-methylvalerate) and of (2R)-2,3-dihydroxy-3-methylbutanoate (2,3-dihydroxyisovalerate) into 2-oxo-3-methylbutanoate (2-oxoisovalerate), the penultimate precursor to L-isoleucine and L-valine, respectively. The protein is Dihydroxy-acid dehydratase of Burkholderia thailandensis (strain ATCC 700388 / DSM 13276 / CCUG 48851 / CIP 106301 / E264).